Here is a 305-residue protein sequence, read N- to C-terminus: Putative lipid kinase SAR0780 (305 aa).

The region spanning 3-139 (NKYTHGVLFY…YDVIKINNQY (137 aa)) is the DAGKc domain. ATP is bound by residues Ser-44, 74–80 (GDGTVNE), and Thr-101. Ser-220, Asp-223, and Glu-225 together coordinate Mg(2+). The active-site Proton acceptor is Glu-281.

This sequence belongs to the diacylglycerol/lipid kinase family. Mg(2+) serves as cofactor.

Its function is as follows. May catalyze the ATP-dependent phosphorylation of lipids other than diacylglycerol (DAG). In fact, is not able to exhibit diacylglycerol kinase activity in vitro. In Staphylococcus aureus (strain MRSA252), this protein is Putative lipid kinase SAR0780.